The sequence spans 263 residues: Exosome complex component Rrp4 (263 aa).

The S1 motif domain maps to 51–127 (GKYIPSRKDF…KAMKVELSMR (77 aa)). The KH domain occupies 135–196 (SKGRIIEVVP…DRLTTAIEMI (62 aa)). Residues 213–263 (LRGEPEGTEGSDEEQLVDEEVAGVSLEDDDVTEETSRKVDVLLDNDTDETN) are disordered. Residues 218-245 (EGTEGSDEEQLVDEEVAGVSLEDDDVTE) show a composition bias toward acidic residues.

Belongs to the RRP4 family. In terms of assembly, component of the archaeal exosome complex. Forms a trimer of Rrp4 and/or Csl4 subunits. The trimer associates with a hexameric ring-like arrangement composed of 3 Rrp41-Rrp42 heterodimers.

Its subcellular location is the cytoplasm. In terms of biological role, non-catalytic component of the exosome, which is a complex involved in RNA degradation. Increases the RNA binding and the efficiency of RNA degradation. Confers strong poly(A) specificity to the exosome. The protein is Exosome complex component Rrp4 of Methanococcoides burtonii (strain DSM 6242 / NBRC 107633 / OCM 468 / ACE-M).